Reading from the N-terminus, the 518-residue chain is Dihydropyrimidinase 2 (518 aa).

Zn(2+) contacts are provided by histidine 59, histidine 61, and lysine 152. Lysine 152 is modified (N6-carboxylysine). A substrate-binding site is contributed by tyrosine 157. Histidine 185 and histidine 241 together coordinate Zn(2+). A substrate-binding site is contributed by serine 291. Residue aspartate 319 participates in Zn(2+) binding. Residue asparagine 340 coordinates substrate.

It belongs to the metallo-dependent hydrolases superfamily. Hydantoinase/dihydropyrimidinase family. In terms of assembly, homotetramer. Requires Zn(2+) as cofactor. Carboxylation allows a single lysine to coordinate two zinc ions.

It catalyses the reaction 5,6-dihydrouracil + H2O = 3-(carbamoylamino)propanoate + H(+). The chain is Dihydropyrimidinase 2 (dhp-2) from Caenorhabditis briggsae.